We begin with the raw amino-acid sequence, 485 residues long: MRLYNTLNRKKEEFVPLNGNKVNLYACGITAYDLCHIGHARSSVVFDILVRYLRFKGYDVTFVRNFTDIDDKIINRANETGVTSTELAEKFIGEFYVDMDKLNILRADIEPKCTEHIPEMIELTQTLIEKDHAYATPSGDVYFKVRSFDDYGKLSGRNIEDLQSGARIQPGEEKQDPLDFALWKAAKPGEPSWESPWGQGRPGWHLECSAMSEKYFELPFDIHGGGQDLSFPHHENEIAQSEAATGKEMARFWVHNGFVQINSEKMSKSLGNFFTIRDILDKFMPETLRYFLLTMHYRSPLDFSFEALEEAEKGIRRVYSALEQTAEALNKSKWSKAALPEEVLAEIEDAEKGWADAMEDDMNTAGAMGHMFTLIRLAGRIGEEKSWRKSEGGRDAWIRILEDMKKWGEVLGIFTRDPKEFLEELKLCMLERKGIEVAKVEELVAARQEARKNKDFARSDEIRDELIELGVEVKDTPQGAVWSVI.

Cys-27 contributes to the Zn(2+) binding site. Residues 29–39 (ITAYDLCHIGH) carry the 'HIGH' region motif. Zn(2+) is bound by residues Cys-208, His-233, and Glu-237. The 'KMSKS' region motif lies at 265–269 (KMSKS). Lys-268 contacts ATP.

It belongs to the class-I aminoacyl-tRNA synthetase family. Monomer. The cofactor is Zn(2+).

It localises to the cytoplasm. It carries out the reaction tRNA(Cys) + L-cysteine + ATP = L-cysteinyl-tRNA(Cys) + AMP + diphosphate. This is Cysteine--tRNA ligase from Maridesulfovibrio salexigens (strain ATCC 14822 / DSM 2638 / NCIMB 8403 / VKM B-1763) (Desulfovibrio salexigens).